The chain runs to 521 residues: U4/U6 small nuclear ribonucleoprotein Prp4 (521 aa).

An N6-acetyllysine modification is found at Lys-26. WD repeat units follow at residues 228 to 267 (GDDR…LLHT), 270 to 317 (GHNT…PVAD), 320 to 359 (GHTV…EILH), 362 to 401 (GHSM…CIMF), 404 to 443 (GHLK…CVYT), 446 to 486 (AHQN…PLKT), and 489 to 521 (GHEG…WMAE).

In terms of assembly, component of the precatalytic spliceosome (spliceosome B complex). Component of the U4/U6-U5 tri-snRNP complex, a building block of the precatalytic spliceosome (spliceosome B complex). The U4/U6-U5 tri-snRNP complex is composed of the U4, U6 and U5 snRNAs and at least PRPF3, PRPF4, PRPF6, PRPF8, PRPF31, SNRNP200, TXNL4A, SNRNP40, SNRPB, SNRPD1, SNRPD2, SNRPD3, SNRPE, SNRPF, SNRPG, DDX23, CD2BP2, PPIH, SNU13, EFTUD2, SART1 and USP39, plus LSM2, LSM3, LSM4, LSM5, LSM6, LSM7 and LSM8. Interacts directly with PRPF18, PPIH and PRPF3. Part of a heteromeric complex containing PPIH, PRPF3 and PRPF4 that is stable in the absence of RNA. Interacts with ERCC6.

The protein resides in the nucleus. It localises to the nucleus speckle. Plays a role in pre-mRNA splicing as component of the U4/U6-U5 tri-snRNP complex that is involved in spliceosome assembly, and as component of the precatalytic spliceosome (spliceosome B complex). The protein is U4/U6 small nuclear ribonucleoprotein Prp4 (PRPF4) of Pongo abelii (Sumatran orangutan).